A 402-amino-acid polypeptide reads, in one-letter code: Secreted RxLR effector protein 73 (402 aa).

Residues 1–23 (MRLLHVVVATVSLTGAITSLIAA) form the signal peptide. N27 carries N-linked (GlcNAc...) asparagine glycosylation. Positions 104–107 (RVLR) match the RxLR motif. 5 N-linked (GlcNAc...) asparagine glycosylation sites follow: N111, N134, N143, N165, and N286.

Belongs to the RxLR effector family.

The protein resides in the secreted. It localises to the host cell. Functionally, secreted effector that completely suppresses the host cell death induced by cell death-inducing proteins. In Plasmopara viticola (Downy mildew of grapevine), this protein is Secreted RxLR effector protein 73.